Here is a 265-residue protein sequence, read N- to C-terminus: 5'-nucleotidase SurE (265 aa).

Residues Asp8, Asp9, Ser41, and Asn100 each contribute to the a divalent metal cation site.

The protein belongs to the SurE nucleotidase family. Requires a divalent metal cation as cofactor.

The protein localises to the cytoplasm. The catalysed reaction is a ribonucleoside 5'-phosphate + H2O = a ribonucleoside + phosphate. Nucleotidase that shows phosphatase activity on nucleoside 5'-monophosphates. The chain is 5'-nucleotidase SurE from Brevibacillus brevis (strain 47 / JCM 6285 / NBRC 100599).